Here is a 375-residue protein sequence, read N- to C-terminus: Carbamoyl phosphate synthase small chain (375 aa).

A CPSase region spans residues 1–180 (MSKALLVLED…DAYVVEPKGK (180 aa)). The L-glutamine site is built by Ser46, Gly232, and Gly234. Residues 184–375 (TVAALDLGIK…SFVELMAAQR (192 aa)) form the Glutamine amidotransferase type-1 domain. The Nucleophile role is filled by Cys260. The L-glutamine site is built by Phe261, Gln264, Asn302, Gly304, and Phe305. Active-site residues include His350 and Glu352.

Belongs to the CarA family. As to quaternary structure, composed of two chains; the small (or glutamine) chain promotes the hydrolysis of glutamine to ammonia, which is used by the large (or ammonia) chain to synthesize carbamoyl phosphate. Tetramer of heterodimers (alpha,beta)4.

The enzyme catalyses hydrogencarbonate + L-glutamine + 2 ATP + H2O = carbamoyl phosphate + L-glutamate + 2 ADP + phosphate + 2 H(+). It catalyses the reaction L-glutamine + H2O = L-glutamate + NH4(+). It functions in the pathway amino-acid biosynthesis; L-arginine biosynthesis; carbamoyl phosphate from bicarbonate: step 1/1. The protein operates within pyrimidine metabolism; UMP biosynthesis via de novo pathway; (S)-dihydroorotate from bicarbonate: step 1/3. Its function is as follows. Small subunit of the glutamine-dependent carbamoyl phosphate synthetase (CPSase). CPSase catalyzes the formation of carbamoyl phosphate from the ammonia moiety of glutamine, carbonate, and phosphate donated by ATP, constituting the first step of 2 biosynthetic pathways, one leading to arginine and/or urea and the other to pyrimidine nucleotides. The small subunit (glutamine amidotransferase) binds and cleaves glutamine to supply the large subunit with the substrate ammonia. This chain is Carbamoyl phosphate synthase small chain, found in Mycobacterium leprae (strain TN).